The primary structure comprises 198 residues: Glycerol-3-phosphate acyltransferase (198 aa).

The next 6 membrane-spanning stretches (helical) occupy residues 1 to 21, 53 to 73, 79 to 99, 111 to 131, 136 to 156, and 158 to 178; these read MNLL…GYLA, IIVF…AKYL, WQVA…WLNW, IFLG…IIMI, IVSL…FLSF, and GSNI…LVIW.

This sequence belongs to the PlsY family. In terms of assembly, probably interacts with PlsX.

The protein localises to the cell inner membrane. It catalyses the reaction an acyl phosphate + sn-glycerol 3-phosphate = a 1-acyl-sn-glycero-3-phosphate + phosphate. The protein operates within lipid metabolism; phospholipid metabolism. Its function is as follows. Catalyzes the transfer of an acyl group from acyl-phosphate (acyl-PO(4)) to glycerol-3-phosphate (G3P) to form lysophosphatidic acid (LPA). This enzyme utilizes acyl-phosphate as fatty acyl donor, but not acyl-CoA or acyl-ACP. The polypeptide is Glycerol-3-phosphate acyltransferase (Prochlorococcus marinus (strain NATL1A)).